Consider the following 315-residue polypeptide: Olfactory receptor 4K3 (315 aa).

Residues 1 to 25 lie on the Extracellular side of the membrane; the sequence is MAWSNQSAVTEFILRGLSSSLELQI. N-linked (GlcNAc...) asparagine glycosylation occurs at Asn-5. Residues 26 to 49 traverse the membrane as a helical segment; sequence FYFLFFSIVYAATVLGNLLIVVTI. The Cytoplasmic segment spans residues 50-57; it reads ASEPHLHS. Residues 58–79 form a helical membrane-spanning segment; the sequence is PMYFLLGNLSFIDMSLASFATP. Over 80-100 the chain is Extracellular; that stretch reads KMIADFLREHKAISFEGCMTQ. Cysteines 97 and 189 form a disulfide. The chain crosses the membrane as a helical span at residues 101-120; that stretch reads MFFLHLLGGAEIVLLISMSF. Topologically, residues 121–139 are cytoplasmic; it reads DRYVAICKPLHYLTIMSRR. The helical transmembrane segment at 140–158 threads the bilayer; that stretch reads MCVGLVILSWIVGIFHALS. At 159–195 the chain is on the extracellular side; it reads QLAFTVNLPFCGPNEVDSFFCDLPLVIKLACVDTYIL. The chain crosses the membrane as a helical span at residues 196–219; that stretch reads GVFMISTSGMIALVCFILLVISYT. Residues 220–235 lie on the Cytoplasmic side of the membrane; the sequence is IILVTVRQRSSGGSSK. Residues 236–258 form a helical membrane-spanning segment; the sequence is ALSTCSAHFTVVTLFFGPCTFIY. Residues 259–269 lie on the Extracellular side of the membrane; it reads VWPFTNFPIDK. Residues 270-289 traverse the membrane as a helical segment; it reads VLSVFYTIYTPLLNPVIYTV. Residues 290–315 lie on the Cytoplasmic side of the membrane; that stretch reads RNKDVKYSMRKLSSHIFKSRKTDHTP.

This sequence belongs to the G-protein coupled receptor 1 family.

The protein resides in the cell membrane. Its function is as follows. Odorant receptor. This chain is Olfactory receptor 4K3 (OR4K3), found in Homo sapiens (Human).